Reading from the N-terminus, the 273-residue chain is ABC transporter glutamine-binding protein GlnH (273 aa).

An N-terminal signal peptide occupies residues Met-1–Ala-20. The N-palmitoyl cysteine moiety is linked to residue Cys-21. Cys-21 carries the S-diacylglycerol cysteine lipid modification.

The protein belongs to the bacterial solute-binding protein 3 family. As to quaternary structure, the complex is composed of two ATP-binding proteins (GlnQ), two transmembrane proteins (GlnM and GlnP) and a solute-binding protein (GlnH).

It localises to the cell membrane. Its function is as follows. Part of the ABC transporter complex GlnHMPQ involved in glutamine transport. The protein is ABC transporter glutamine-binding protein GlnH (glnH) of Bacillus subtilis (strain 168).